The chain runs to 816 residues: Probable E3 ubiquitin-protein ligase hulA (816 aa).

Positions Met-1–Arg-112 constitute a C2 domain. Disordered stretches follow at residues Asn-134–Arg-238 and Arg-253–Asp-353. Polar residues-rich tracts occupy residues Met-151–Pro-168, Ala-177–Val-202, Ser-217–Asp-226, and Arg-253–Arg-270. Positions Gly-229 to Asn-262 constitute a WW 1 domain. Positions Leu-279 to Thr-294 are enriched in basic and acidic residues. Residues Gly-295–Gln-309 are compositionally biased toward polar residues. Residues Thr-310 to Gly-333 show a composition bias toward low complexity. WW domains lie at Gly-333–Arg-366 and Gly-393–Leu-426. In terms of domain architecture, HECT spans Ser-482–Glu-816. Catalysis depends on Cys-784, which acts as the Glycyl thioester intermediate.

This sequence belongs to the RSP5/NEDD4 family. As to quaternary structure, interacts with creD.

It is found in the cytoplasm. It carries out the reaction S-ubiquitinyl-[E2 ubiquitin-conjugating enzyme]-L-cysteine + [acceptor protein]-L-lysine = [E2 ubiquitin-conjugating enzyme]-L-cysteine + N(6)-ubiquitinyl-[acceptor protein]-L-lysine.. The protein operates within protein modification; protein ubiquitination. Functionally, E3 ubiquitin-protein ligase which accepts ubiquitin from an E2 ubiquitin-conjugating enzyme in the form of a thioester and then directly transfers the ubiquitin to targeted substrates. Probably involved in the regulatory network controlling carbon source utilization. This is Probable E3 ubiquitin-protein ligase hulA (hulA) from Aspergillus oryzae (strain ATCC 42149 / RIB 40) (Yellow koji mold).